A 664-amino-acid polypeptide reads, in one-letter code: Translation factor guf1, mitochondrial (664 aa).

Residues 1 to 43 constitute a mitochondrion transit peptide; it reads MRGCLQLARWLSAGPKCPAASLPKAPSGLYNTIRSFTSSAQLA. One can recognise a tr-type G domain in the interval 66-246; sequence DRYRNFCIVA…TVVEKIPAPV (181 aa). Residues 75–82, 139–143, and 193–196 each bind GTP; these read AHVDHGKS, DTPGH, and NKVD.

Belongs to the TRAFAC class translation factor GTPase superfamily. Classic translation factor GTPase family. LepA subfamily.

Its subcellular location is the mitochondrion inner membrane. The enzyme catalyses GTP + H2O = GDP + phosphate + H(+). Functionally, promotes mitochondrial protein synthesis. May act as a fidelity factor of the translation reaction, by catalyzing a one-codon backward translocation of tRNAs on improperly translocated ribosomes. Binds to mitochondrial ribosomes in a GTP-dependent manner. In Aspergillus oryzae (strain ATCC 42149 / RIB 40) (Yellow koji mold), this protein is Translation factor guf1, mitochondrial (guf1).